Consider the following 630-residue polypeptide: Prolactin receptor (630 aa).

A signal peptide spans 1–23; the sequence is MMTKVGEVLLLLLLPAFVPHTDG. At 24 to 234 the chain is on the extracellular side; sequence THYSLPGKPT…VKVPEYLHRE (211 aa). Fibronectin type-III domains lie at 31 to 128 and 130 to 230; these read KPTE…IVQP and PPEK…VPEY. 2 disulfide bridges follow: cysteine 37/cysteine 47 and cysteine 76/cysteine 87. Asparagine 92 and asparagine 101 each carry an N-linked (GlcNAc...) asparagine glycan. Zn(2+) is bound by residues aspartate 212 and histidine 213. The WSXWS motif signature appears at 216 to 220; sequence WSEWS. A helical membrane pass occupies residues 235–258; it reads KSVWILVLVFSAFILLLLTWLIHM. At 259–630 the chain is on the cytoplasmic side; it reads NSHSLKHCML…DTATVFSVHT (372 aa). Positions 267 to 275 match the Box 1 motif motif; sequence MLPPVPGPK. The segment at 339-389 is disordered; sequence KSIGSASDSDSGRGSCDSDNLLMDKSGAPKEEQQQQNQEGDQIGKETQGPK. Residues 340–357 are compositionally biased toward low complexity; sequence SIGSASDSDSGRGSCDSD. Residues 380-389 show a composition bias toward basic and acidic residues; that stretch reads QIGKETQGPK.

It belongs to the type I cytokine receptor family. Type 1 subfamily.

It localises to the membrane. Functionally, this is a receptor for the anterior pituitary hormone prolactin. The sequence is that of Prolactin receptor (prlr) from Oreochromis niloticus (Nile tilapia).